The following is a 426-amino-acid chain: 3-phosphoshikimate 1-carboxyvinyltransferase (426 aa).

Residues K22, S23, and R27 each contribute to the 3-phosphoshikimate site. A phosphoenolpyruvate-binding site is contributed by K22. Residues G96 and R124 each contribute to the phosphoenolpyruvate site. 7 residues coordinate 3-phosphoshikimate: S170, S171, Q172, S198, D314, N337, and K341. Residue Q172 participates in phosphoenolpyruvate binding. Catalysis depends on D314, which acts as the Proton acceptor. Positions 345, 387, and 412 each coordinate phosphoenolpyruvate.

It belongs to the EPSP synthase family. In terms of assembly, monomer.

The protein resides in the cytoplasm. It carries out the reaction 3-phosphoshikimate + phosphoenolpyruvate = 5-O-(1-carboxyvinyl)-3-phosphoshikimate + phosphate. The protein operates within metabolic intermediate biosynthesis; chorismate biosynthesis; chorismate from D-erythrose 4-phosphate and phosphoenolpyruvate: step 6/7. Catalyzes the transfer of the enolpyruvyl moiety of phosphoenolpyruvate (PEP) to the 5-hydroxyl of shikimate-3-phosphate (S3P) to produce enolpyruvyl shikimate-3-phosphate and inorganic phosphate. This chain is 3-phosphoshikimate 1-carboxyvinyltransferase, found in Shewanella loihica (strain ATCC BAA-1088 / PV-4).